The sequence spans 88 residues: Small ribosomal subunit protein uS17 (88 aa).

Belongs to the universal ribosomal protein uS17 family. In terms of assembly, part of the 30S ribosomal subunit.

One of the primary rRNA binding proteins, it binds specifically to the 5'-end of 16S ribosomal RNA. This Synechococcus sp. (strain CC9311) protein is Small ribosomal subunit protein uS17.